A 426-amino-acid polypeptide reads, in one-letter code: Glutamate-1-semialdehyde 2,1-aminomutase (426 aa).

Lys-265 bears the N6-(pyridoxal phosphate)lysine mark.

This sequence belongs to the class-III pyridoxal-phosphate-dependent aminotransferase family. HemL subfamily. In terms of assembly, homodimer. It depends on pyridoxal 5'-phosphate as a cofactor.

Its subcellular location is the cytoplasm. The catalysed reaction is (S)-4-amino-5-oxopentanoate = 5-aminolevulinate. Its pathway is porphyrin-containing compound metabolism; protoporphyrin-IX biosynthesis; 5-aminolevulinate from L-glutamyl-tRNA(Glu): step 2/2. In Klebsiella pneumoniae (strain 342), this protein is Glutamate-1-semialdehyde 2,1-aminomutase.